We begin with the raw amino-acid sequence, 308 residues long: uncharacterized protein (308 aa).

Positions 212-242 (EADKMTIDYMRELDNLQRQYDGLVDEDKALH) form a coiled coil.

This is an uncharacterized protein from Ostreid herpesvirus 1 (isolate France) (OsHV-1).